The chain runs to 103 residues: Small ribosomal subunit protein cS23 (103 aa).

It belongs to the chloroplast-specific ribosomal protein cS23 family. As to quaternary structure, part of the 30S ribosomal subunit.

Its subcellular location is the plastid. It localises to the chloroplast. Probably a ribosomal protein or a ribosome-associated protein. The chain is Small ribosomal subunit protein cS23 (ycf65) from Euglena granulata.